The sequence spans 308 residues: MSRIRKAPAGILGFPVAPFNTQGKLEEEALFQNIEFLLNEGLEAIFIACGSGEFQSLSQKEYEQMVEVAVSAAGGKVPVYTGVGGNLSTALDWAQLSEKKGADGYLILPPYLVHGEQEGLYQYAKTIIESTDLNAILYQRDNAVLSVEQIKRLTECEQLVGVKDGVGNMDLNINLVYTIGDRLGWLNGMPMAEVTMPAYLPIGFHSYSSAISNYIPHISRMFYDALKNGNDELVKELYRHVILPINDIRKQRKGYAVSLIKAGMEIMGLNVRNTARPPVGPVEKDHYQQLEAILKQAADRFPKKAATV.

Belongs to the DapA family.

It carries out the reaction 5-dehydro-4-deoxy-D-glucarate + H(+) = 2,5-dioxopentanoate + CO2 + H2O. Its pathway is carbohydrate acid metabolism; D-glucarate degradation; 2,5-dioxopentanoate from D-glucarate: step 2/2. The chain is Probable 5-dehydro-4-deoxyglucarate dehydratase (ycbC) from Bacillus subtilis (strain 168).